The primary structure comprises 534 residues: EH domain-containing protein 1 (534 aa).

The residue at position 1 (Met-1) is an N-acetylmethionine. Residues 55 to 286 form the Dynamin-type G domain; that stretch reads FDNKPMVLLV…DLFKDIQSLP (232 aa). The interval 65-72 is G1 motif; sequence GQYSTGKT. Residue 65 to 72 coordinates ATP; that stretch reads GQYSTGKT. Residues 91-92 form a G2 motif region; sequence EP. The tract at residues 153 to 156 is G3 motif; sequence DTPG. Positions 198–227 form a coiled coil; sequence DEFSEVIKALKNHEDKIRVVLNKADQIETQ. The interval 219–222 is G4 motif; that stretch reads NKAD. An ATP-binding site is contributed by Lys-220. Residue Ile-243 is a region of interest, G5 motif. An ATP-binding site is contributed by Trp-258. Residues Ser-355 and Ser-456 each carry the phosphoserine modification. One can recognise an EH domain in the interval 444 to 532; sequence DKPTYDEIFY…PHLIPPSKRR (89 aa). Positions 476 to 511 constitute an EF-hand domain; that stretch reads LPNTVLGKIWKLADVDKDGLLDDEEFALANHLIKVK. The Ca(2+) site is built by Asp-489, Asp-491, Asp-493, and Glu-500.

This sequence belongs to the TRAFAC class dynamin-like GTPase superfamily. Dynamin/Fzo/YdjA family. EHD subfamily. As to quaternary structure, homooligomer, and heterooligomer with EHD2, EHD3 and EHD4, ATP-binding is required for heterooligomerization. Interacts (via EH domain) with MICALL1 (via NPF1 motif); the interaction is direct and recruits EHD1 to membranes. Interacts with RAB35; the interaction is indirect through MICALL1 and recruits EHD1 to membranes. Interacts (via EH domain) with PACSIN2 (via NPF motifs); regulates localization to tubular recycling endosome membranes. Interacts with PACSIN1. Interacts with RAB8A. Interacts with FER1L5 (via second C2 domain). Interacts with MYOF. Interacts with ZFYVE20. Interacts (via EH domain) with RAB11FIP2.

Its subcellular location is the recycling endosome membrane. It is found in the early endosome membrane. The protein resides in the cell membrane. It localises to the cell projection. The protein localises to the cilium membrane. In terms of biological role, ATP- and membrane-binding protein that controls membrane reorganization/tubulation upon ATP hydrolysis. In vitro causes vesiculation of endocytic membranes. Acts in early endocytic membrane fusion and membrane trafficking of recycling endosomes. Recruited to endosomal membranes upon nerve growth factor stimulation, indirectly regulates neurite outgrowth. Plays a role in myoblast fusion. Involved in the unidirectional retrograde dendritic transport of endocytosed BACE1 and in efficient sorting of BACE1 to axons implicating a function in neuronal APP processing. Plays a role in the formation of the ciliary vesicle (CV), an early step in cilium biogenesis. Proposed to be required for the fusion of distal appendage vesicles (DAVs) to form the CV by recruiting SNARE complex component SNAP29. Is required for recruitment of transition zone proteins CEP290, RPGRIP1L, TMEM67 and B9D2, and of IFT20 following DAV reorganization before Rab8-dependent ciliary membrane extension. Required for the loss of CCP110 form the mother centriole essential for the maturation of the basal body during ciliogenesis. The protein is EH domain-containing protein 1 of Rattus norvegicus (Rat).